We begin with the raw amino-acid sequence, 257 residues long: Protein IMPACT homolog (257 aa).

Residues 9-102 (AEIESLASIF…SLVQDFIRDL (94 aa)) enclose the RWD domain.

The protein belongs to the IMPACT family. Interacts with gcn-1; prevents the interaction of gcn-1 with gcn-2 and inhibits gcn-2 kinase activity. Interaction with rpl-39; this interaction occurs in a gcn-1-independent manner. Associates with ribosomes; this interaction occurs in a gcn-1-independent manner. Associates with actin; this interaction occurs in a gcn-1-independent manner.

It localises to the cytoplasm. Functionally, translational regulator that ensures constant high levels of translation under amino acid starvation. Plays a role as a negative regulator of the gcn-2 kinase activity; impairs gcn-1-mediated gcn-2 activation, and hence gcn-2-mediated eIF-2-alpha phosphorylation and subsequent down-regulation of protein synthesis in amino acid-starved cells. Plays a role in differentiation of neuronal cells by stimulating neurite outgrowth. In Caenorhabditis elegans, this protein is Protein IMPACT homolog.